Reading from the N-terminus, the 503-residue chain is Ribonuclease Y (503 aa).

A helical membrane pass occupies residues 2-22 (GIIIGLIIVSVALIISLCSLL). Positions 193–253 (TTNLVKLPND…IRREIATKTL (61 aa)) constitute a KH domain. The 94-residue stretch at 319-412 (VLLHSVEVAK…VAIADAISAS (94 aa)) folds into the HD domain.

It belongs to the RNase Y family.

Its subcellular location is the cell membrane. In terms of biological role, endoribonuclease that initiates mRNA decay. In Mesoplasma florum (strain ATCC 33453 / NBRC 100688 / NCTC 11704 / L1) (Acholeplasma florum), this protein is Ribonuclease Y.